A 400-amino-acid polypeptide reads, in one-letter code: Cartilage-associated protein (400 aa).

The first 25 residues, 1–25 (MGPRSPTAALLVLLCVGCAPTPGRG), serve as a signal peptide directing secretion. N-linked (GlcNAc...) asparagine glycosylation is found at Asn86 and Asn362.

Belongs to the leprecan family. Found in articular chondrocytes. Expressed in a variety of tissues.

It is found in the secreted. The protein localises to the extracellular space. The protein resides in the extracellular matrix. In terms of biological role, necessary for efficient 3-hydroxylation of fibrillar collagen prolyl residues. This Mus musculus (Mouse) protein is Cartilage-associated protein (Crtap).